The chain runs to 69 residues: Large ribosomal subunit protein bL31 (69 aa).

It belongs to the bacterial ribosomal protein bL31 family. Type A subfamily. Part of the 50S ribosomal subunit.

Its function is as follows. Binds the 23S rRNA. In Magnetococcus marinus (strain ATCC BAA-1437 / JCM 17883 / MC-1), this protein is Large ribosomal subunit protein bL31.